A 104-amino-acid chain; its full sequence is PE-PGRS family protein PE_PGRS60 (104 aa).

The 60-residue stretch at 1–60 folds into the PE domain; it reads MSYVIAAPEALVAAATDLATLGSTIGAANAAAAGSTTALLTAGADEVSAAIAAYSECTAR. The segment at 64-104 is disordered; the sequence is HSVRGRRRSMSGSCRPWPQVGAPMRPPRPPASRRCRARSIC. Residues 94–104 are compositionally biased toward basic residues; that stretch reads ASRRCRARSIC.

This sequence belongs to the mycobacterial PE family. PGRS subfamily.

In terms of biological role, binds fibronectin. May contribute to pathogenicity. The chain is PE-PGRS family protein PE_PGRS60 from Mycobacterium tuberculosis (strain ATCC 25618 / H37Rv).